Reading from the N-terminus, the 365-residue chain is Patr class I histocompatibility antigen, A-126 alpha chain (365 aa).

Residues 1–24 (MAVMAPRTLVLLLSGALALTQTWA) form the signal peptide. Residues 25-114 (GSHSMRYFST…LRGYYNQSED (90 aa)) are alpha-1. Residues 25–308 (GSHSMRYFST…EPSSQPTIPI (284 aa)) are Extracellular-facing. Residue N110 is glycosylated (N-linked (GlcNAc...) asparagine). Positions 115–206 (GSHTIQLMFG…ENGKETLQRT (92 aa)) are alpha-2. Disulfide bonds link C125/C188 and C227/C283. The alpha-3 stretch occupies residues 207 to 298 (DPPKTHMTHH…GLPKPLTLRW (92 aa)). Positions 209-295 (PKTHMTHHPI…QHEGLPKPLT (87 aa)) constitute an Ig-like C1-type domain. The segment at 299 to 308 (EPSSQPTIPI) is connecting peptide. Residues 309–332 (VGIIAGLVLLGAVITGAVVAAVMW) form a helical membrane-spanning segment. Residues 333–365 (RRKSSDRKGGSYSQAASSDSAQGSDVSLTACKV) are Cytoplasmic-facing. The segment at 338–365 (DRKGGSYSQAASSDSAQGSDVSLTACKV) is disordered. A compositionally biased stretch (low complexity) spans 342 to 359 (GSYSQAASSDSAQGSDVS). S343 carries the post-translational modification Phosphoserine. Y344 is subject to Phosphotyrosine. Phosphoserine is present on residues S345, S349, S352, S356, and S359.

The protein belongs to the MHC class I family. In terms of assembly, heterodimer of an alpha chain and a beta chain (beta-2-microglobulin).

It localises to the membrane. In terms of biological role, involved in the presentation of foreign antigens to the immune system. The sequence is that of Patr class I histocompatibility antigen, A-126 alpha chain (Patr-A) from Pan troglodytes (Chimpanzee).